Reading from the N-terminus, the 128-residue chain is Sulfurtransferase TusD (128 aa).

The active-site Cysteine persulfide intermediate is cysteine 78.

Belongs to the DsrE/TusD family. In terms of assembly, heterohexamer, formed by a dimer of trimers. The hexameric TusBCD complex contains 2 copies each of TusB, TusC and TusD. The TusBCD complex interacts with TusE.

The protein resides in the cytoplasm. Part of a sulfur-relay system required for 2-thiolation of 5-methylaminomethyl-2-thiouridine (mnm(5)s(2)U) at tRNA wobble positions. Accepts sulfur from TusA and transfers it in turn to TusE. This Buchnera aphidicola subsp. Acyrthosiphon pisum (strain 5A) protein is Sulfurtransferase TusD.